A 76-amino-acid polypeptide reads, in one-letter code: Acyl carrier protein (76 aa).

One can recognise a Carrier domain in the interval 2–76; it reads SSIFDKVKAI…SAVEYIKENQ (75 aa). At Ser-36 the chain carries O-(pantetheine 4'-phosphoryl)serine.

Belongs to the acyl carrier protein (ACP) family. In terms of processing, 4'-phosphopantetheine is transferred from CoA to a specific serine of apo-ACP by AcpS. This modification is essential for activity because fatty acids are bound in thioester linkage to the sulfhydryl of the prosthetic group.

It is found in the cytoplasm. It participates in lipid metabolism; fatty acid biosynthesis. Functionally, carrier of the growing fatty acid chain in fatty acid biosynthesis. In Heliobacterium modesticaldum (strain ATCC 51547 / Ice1), this protein is Acyl carrier protein.